We begin with the raw amino-acid sequence, 113 residues long: Dolichyl-diphosphooligosaccharide--protein glycosyltransferase subunit DAD1 (113 aa).

At Ser2 the chain carries N-acetylserine. Residues 2–30 are Cytoplasmic-facing; it reads SASVLSVISRFLEEYLSSTPQRLKLLDAY. A helical membrane pass occupies residues 31 to 51; the sequence is LLYILLTGALQFGYCLLVGTF. Residue Pro52 is a topological domain, lumenal. Residues 53–73 form a helical membrane-spanning segment; that stretch reads FNSFLSGFISCVGSFILAVCL. At 74 to 92 the chain is on the cytoplasmic side; that stretch reads RIQINPQNKADFQGISPER. Residues 93-113 traverse the membrane as a helical segment; sequence AFADFLFASTILHLVVMNFVG.

Belongs to the DAD/OST2 family. As to quaternary structure, component of the oligosaccharyltransferase (OST) complex. OST exists in two different complex forms which contain common core subunits RPN1, RPN2, OST48, OST4, DAD1 and TMEM258, either STT3A or STT3B as catalytic subunits, and form-specific accessory subunits. STT3A complex assembly occurs through the formation of 3 subcomplexes. Subcomplex 1 contains RPN1 and TMEM258, subcomplex 2 contains the STT3A-specific subunits STT3A, DC2/OSTC, and KCP2 as well as the core subunit OST4, and subcomplex 3 contains RPN2, DAD1, and OST48. The STT3A complex can form stable complexes with the Sec61 complex or with both the Sec61 and TRAP complexes.

Its subcellular location is the endoplasmic reticulum membrane. The protein operates within protein modification; protein glycosylation. Subunit of the oligosaccharyl transferase (OST) complex that catalyzes the initial transfer of a defined glycan (Glc(3)Man(9)GlcNAc(2) in eukaryotes) from the lipid carrier dolichol-pyrophosphate to an asparagine residue within an Asn-X-Ser/Thr consensus motif in nascent polypeptide chains, the first step in protein N-glycosylation. N-glycosylation occurs cotranslationally and the complex associates with the Sec61 complex at the channel-forming translocon complex that mediates protein translocation across the endoplasmic reticulum (ER). All subunits are required for a maximal enzyme activity. This is Dolichyl-diphosphooligosaccharide--protein glycosyltransferase subunit DAD1 from Sus scrofa (Pig).